We begin with the raw amino-acid sequence, 128 residues long: Secreted RxLR effector protein 57 (128 aa).

Residues 1–31 (MHRKRLRVVLSATLLDLITCVQLMLDPLVRS) form the signal peptide. The RxLR signature appears at 58–61 (RILR).

The protein belongs to the RxLR effector family.

It is found in the secreted. It localises to the host nucleus. The protein localises to the host cytoplasm. Functionally, secreted effector that completely suppresses the host cell death induced by cell death-inducing proteins. In Plasmopara viticola (Downy mildew of grapevine), this protein is Secreted RxLR effector protein 57.